We begin with the raw amino-acid sequence, 551 residues long: GMP synthase [glutamine-hydrolyzing] (551 aa).

The tract at residues 1-28 (MTSSPTAAARTEGEAAPTVPTQVESGTA) is disordered. Residues 19-28 (VPTQVESGTA) are compositionally biased toward polar residues. The Glutamine amidotransferase type-1 domain maps to 37–227 (MVAILDFGSQ…VYHICGCEPE (191 aa)). Catalysis depends on cysteine 114, which acts as the Nucleophile. Catalysis depends on residues histidine 201 and glutamate 203. One can recognise a GMPS ATP-PPase domain in the interval 228 to 426 (WTTAAFIEEA…LGLPEEIVQR (199 aa)). An ATP-binding site is contributed by 255–261 (SGGVDSS).

As to quaternary structure, homodimer.

It catalyses the reaction XMP + L-glutamine + ATP + H2O = GMP + L-glutamate + AMP + diphosphate + 2 H(+). The protein operates within purine metabolism; GMP biosynthesis; GMP from XMP (L-Gln route): step 1/1. In terms of biological role, catalyzes the synthesis of GMP from XMP. The chain is GMP synthase [glutamine-hydrolyzing] from Gloeobacter violaceus (strain ATCC 29082 / PCC 7421).